Reading from the N-terminus, the 232-residue chain is Ornithine carbamoyltransferase (232 aa).

Residues Gln-15, Arg-39, and 66-69 (HPTQ) each bind carbamoyl phosphate. Residues Asn-99, Asp-163, and 167 to 168 (SM) each bind L-ornithine. Carbamoyl phosphate contacts are provided by residues 204–207 (HCLP) and Thr-232.

Belongs to the aspartate/ornithine carbamoyltransferase superfamily. OTCase family.

It is found in the cytoplasm. The catalysed reaction is carbamoyl phosphate + L-ornithine = L-citrulline + phosphate + H(+). It functions in the pathway amino-acid biosynthesis; L-arginine biosynthesis; L-arginine from L-ornithine and carbamoyl phosphate: step 1/3. Reversibly catalyzes the transfer of the carbamoyl group from carbamoyl phosphate (CP) to the N(epsilon) atom of ornithine (ORN) to produce L-citrulline. The sequence is that of Ornithine carbamoyltransferase (argF) from Neisseria flava.